Here is an 868-residue protein sequence, read N- to C-terminus: DNA mismatch repair protein MutS (868 aa).

621 to 628 lines the ATP pocket; sequence GPNMGGKS. A disordered region spans residues 803 to 852; sequence LESGDGGDTGSAQLPLFGPEPVFPPPAQPEPEPDPIREAVENLDPDGLTP. Over residues 823 to 832 the composition is skewed to pro residues; the sequence is PVFPPPAQPE.

This sequence belongs to the DNA mismatch repair MutS family.

In terms of biological role, this protein is involved in the repair of mismatches in DNA. It is possible that it carries out the mismatch recognition step. This protein has a weak ATPase activity. The polypeptide is DNA mismatch repair protein MutS (Halorhodospira halophila (strain DSM 244 / SL1) (Ectothiorhodospira halophila (strain DSM 244 / SL1))).